The chain runs to 85 residues: Keratin-associated protein 7-1 (85 aa).

Residues 37–82 (GSPLGYGCNGYSSLGYGFGGSSFSNLGCGYGGSFYRPWGSGSGFGY) form a 12 X 2 AA repeats of G-[YCGS] region.

Belongs to the KRTAP type 7 family. As to quaternary structure, interacts with wool keratins. In terms of tissue distribution, wool.

In terms of biological role, in the wool cortex, wool keratin intermediate filaments are embedded in an interfilamentous matrix, consisting of hair keratin-associated proteins (KRTAP), which are essential for the formation of a rigid and resistant wool shaft through their extensive disulfide bond cross-linking with abundant cysteine residues of wool keratins. The matrix proteins include the high-sulfur and high-glycine-tyrosine keratins. The protein is Keratin-associated protein 7-1 (KRTAP7-1) of Ovis aries (Sheep).